Consider the following 126-residue polypeptide: Protein FMP49, mitochondrial (126 aa).

It is found in the mitochondrion. The protein is Protein FMP49, mitochondrial of Saccharomyces cerevisiae (strain ATCC 204508 / S288c) (Baker's yeast).